Reading from the N-terminus, the 295-residue chain is Inositol monophosphatase 1 (295 aa).

5 residues coordinate Mg(2+): Glu73, Asp92, Ile94, Asp95, and Asp231. Residue Glu73 participates in substrate binding. Residues 94–97 and Asp231 each bind substrate; that span reads IDGT.

It belongs to the inositol monophosphatase superfamily. Requires Mg(2+) as cofactor.

Its subcellular location is the cytoplasm. It is found in the nucleus. It carries out the reaction a myo-inositol phosphate + H2O = myo-inositol + phosphate. Its pathway is polyol metabolism; myo-inositol biosynthesis; myo-inositol from D-glucose 6-phosphate: step 2/2. Inhibited by Li(+) and Na(+). Its function is as follows. Responsible for the provision of inositol required for synthesis of phosphatidylinositol and polyphosphoinositides. The chain is Inositol monophosphatase 1 (INM1) from Saccharomyces cerevisiae (strain ATCC 204508 / S288c) (Baker's yeast).